The primary structure comprises 30 residues: Antibacterial 6.5 kDa protein (30 aa).

Positions 1-21 (XXVPYPRPFPRPPIGPRPLPF) are enriched in pro residues. Positions 1-30 (XXVPYPRPFPRPPIGPRPLPFPGGGRPFQS) are disordered.

It to bovine bactenecin 7.

Functionally, strong antimicrobial activity against P.immobilis and M.luteus, less active against E.coli D22. The chain is Antibacterial 6.5 kDa protein from Carcinus maenas (Common shore crab).